A 497-amino-acid chain; its full sequence is MAGVRLSLLKSIQRSIKPHATAKSCSGLLNSHARAFTCGNLLDGPKASPSMISFSSNIRLHNDAKPFNYLGHSSYARAFSSKSDDFGSIVASGVTGSGDGNGNGNDWVEKAKDVLQTSVDAVTETAKKTKDVSDEMIPHVQQFLDSNPYLKDVIVPVSLTMTGTLFAWVVMPRILRRFHTYAMQSSAKLLPVGFSNEDVPYEKSFWGALEDPARYLVTFIAFAQIAAMVAPTTIAAQYFSPTVKGAVILSLVWFLYRWKTNVITRMLSAKSFGGLDREKVLTLDKVSSVGLFAIGLMASAEACGVAVQSILTVGGVGGVATAFAARDILGNVLSGLSMQFSRPFSMGDTIKAGSVEGQVIEMGLTTTSLLNAEKFPVLVPNSLFSSQVIVNKSRAQWRAIASKIPLQIDDLDMIPQISNEIKEMLRSNTKVFLGKEAPHCYLSRVEKSFAELTIGCNLIRMGKEELYNTQQEVLLEAVKIIKKHGVSLGTTWDNSTL.

Residues 1-86 constitute a mitochondrion transit peptide; sequence MAGVRLSLLK…RAFSSKSDDF (86 aa). A run of 5 helical transmembrane segments spans residues 152 to 172, 216 to 236, 238 to 258, 280 to 300, and 305 to 325; these read DVIVPVSLTMTGTLFAWVVMP, LVTFIAFAQIAAMVAPTTIAA, YFSPTVKGAVILSLVWFLYRW, VLTLDKVSSVGLFAIGLMASA, and VAVQSILTVGGVGGVATAFAA.

Belongs to the MscS (TC 1.A.23) family.

It localises to the mitochondrion membrane. Functionally, mechanosensitive channel that opens in response to stretch forces in the membrane lipid bilayer. This Arabidopsis thaliana (Mouse-ear cress) protein is Mechanosensitive ion channel protein 1, mitochondrial (MSL1).